Reading from the N-terminus, the 32-residue chain is Giant hemoglobin AIV chain (32 aa).

The protein belongs to the globin family. Giant hemoglobin is composed of four heme-containing chains (AI to AIV), and two linker chains (AV and AVI).

This chain is Giant hemoglobin AIV chain, found in Lamellibrachia sp. (Deep-sea giant tube worm).